Here is an 89-residue protein sequence, read N- to C-terminus: Small ribosomal subunit protein uS15 (89 aa).

Belongs to the universal ribosomal protein uS15 family. Part of the 30S ribosomal subunit. Forms a bridge to the 50S subunit in the 70S ribosome, contacting the 23S rRNA.

Its function is as follows. One of the primary rRNA binding proteins, it binds directly to 16S rRNA where it helps nucleate assembly of the platform of the 30S subunit by binding and bridging several RNA helices of the 16S rRNA. Forms an intersubunit bridge (bridge B4) with the 23S rRNA of the 50S subunit in the ribosome. This Xanthobacter autotrophicus (strain ATCC BAA-1158 / Py2) protein is Small ribosomal subunit protein uS15.